The primary structure comprises 358 residues: Neutral protease 2 homolog PADG_00776 (358 aa).

A signal peptide spans 1–19 (MRRVSGILAVAAFTISAFA). Residues 20–185 (GVIQPVAKDA…MNQFVKIAKL (166 aa)) constitute a propeptide that is removed on maturation. 2 disulfide bridges follow: C188/C259 and C266/C284. A glycan (N-linked (GlcNAc...) asparagine) is linked at N249. A Zn(2+)-binding site is contributed by H309. E310 is a catalytic residue. H313 and D324 together coordinate Zn(2+).

It belongs to the peptidase M35 family. Zn(2+) serves as cofactor.

It localises to the secreted. The catalysed reaction is Preferential cleavage of bonds with hydrophobic residues in P1'. Also 3-Asn-|-Gln-4 and 8-Gly-|-Ser-9 bonds in insulin B chain.. Secreted metalloproteinase that allows assimilation of proteinaceous substrates. Shows high activities on basic nuclear substrates such as histone and protamine. The chain is Neutral protease 2 homolog PADG_00776 from Paracoccidioides brasiliensis (strain Pb18).